The primary structure comprises 436 residues: Sulfopropanediol 3-dehydrogenase (436 aa).

The NAD(+) site is built by Tyr-118, Gln-180, and Asn-203. The Zn(2+) site is built by Gln-248 and His-251. Catalysis depends on proton acceptor residues Glu-318 and His-319. Asp-352 and His-411 together coordinate Zn(2+).

It belongs to the histidinol dehydrogenase family. HpsN subfamily. The cofactor is Zn(2+).

The catalysed reaction is (2R)-3-sulfopropanediol + 2 NAD(+) + H2O = (2R)-3-sulfolactate + 2 NADH + 3 H(+). Functionally, catalyzes the NAD-dependent oxidation of (R)-2,3-dihydroxypropane-1-sulfonate to (R)-3-sulfolactate. The sequence is that of Sulfopropanediol 3-dehydrogenase from Cupriavidus pinatubonensis (strain JMP 134 / LMG 1197) (Cupriavidus necator (strain JMP 134)).